A 488-amino-acid polypeptide reads, in one-letter code: Putative BPI/LBP family protein At1g04970 (488 aa).

Positions 1–24 (MDVGRCFLFLLLPSFFFLPSQTQS) are cleaved as a signal peptide. N79, N109, N231, N242, and N341 each carry an N-linked (GlcNAc...) asparagine glycan.

The protein belongs to the BPI/LBP/Plunc superfamily. BPI/LBP (TC 1.C.40) family.

The sequence is that of Putative BPI/LBP family protein At1g04970 from Arabidopsis thaliana (Mouse-ear cress).